We begin with the raw amino-acid sequence, 272 residues long: Leucoagglutinating phytohemagglutinin (272 aa).

The first 20 residues, 1-20 (MASSKFFTVLFLVLLTHANS), serve as a signal peptide directing secretion. N-linked (GlcNAc...) (high mannose) asparagine glycosylation is present at Asn-32. Asn-80 carries an N-linked (GlcNAc...) (complex) asparagine glycan.

It belongs to the leguminous lectin family. In terms of assembly, homotetramer. In terms of processing, N-glycosylated on Asn-80; contains xylose.

Its function is as follows. This insecticidal carbohydrate-binding lectin is toxic for the cowpea weevil. The chain is Leucoagglutinating phytohemagglutinin (DLEC2) from Phaseolus vulgaris (Kidney bean).